The primary structure comprises 115 residues: Protein Wnt-2 (115 aa).

The O-palmitoleoyl serine; by PORCN moiety is linked to residue Ser1. A disulfide bridge connects residues Cys81 and Cys96. Asn82 is a glycosylation site (N-linked (GlcNAc...) asparagine).

The protein belongs to the Wnt family. In terms of processing, palmitoleoylation is required for efficient binding to frizzled receptors. Depalmitoleoylation leads to Wnt signaling pathway inhibition.

The protein resides in the secreted. The protein localises to the extracellular space. It localises to the extracellular matrix. Functionally, ligand for members of the frizzled family of seven transmembrane receptors. Probable developmental protein. May be a signaling molecule which affects the development of discrete regions of tissues. Is likely to signal over only few cell diameters. In Strongylocentrotus purpuratus (Purple sea urchin), this protein is Protein Wnt-2 (WNT-2).